Here is an 848-residue protein sequence, read N- to C-terminus: Probable disease resistance protein At5g43730 (848 aa).

The stretch at Ser25–Lys62 forms a coiled coil. Residues Val137–Tyr439 form the NB-ARC domain. Gly179 to Thr186 serves as a coordination point for ATP. LRR repeat units lie at residues Asn534–Phe555, Lys558–Leu580, Ser582–Arg604, Lys605–Leu627, and Asn629–Glu649.

The protein belongs to the disease resistance NB-LRR family.

In terms of biological role, probable disease resistance protein. The protein is Probable disease resistance protein At5g43730 of Arabidopsis thaliana (Mouse-ear cress).